Here is a 459-residue protein sequence, read N- to C-terminus: Siroheme synthase 2 (459 aa).

Residues 1 to 204 form a precorrin-2 dehydrogenase /sirohydrochlorin ferrochelatase region; sequence MDYLPIFCQL…EDRERVQQLT (204 aa). NAD(+) is bound by residues 22–23 and 43–44; these read EI and LD. S128 bears the Phosphoserine mark. The interval 216–459 is uroporphyrinogen-III C-methyltransferase; that stretch reads GEVTLVGAGP…KLSWFSDQTA (244 aa). Position 225 (P225) interacts with S-adenosyl-L-methionine. Residue D248 is the Proton acceptor of the active site. K270 serves as the catalytic Proton donor. S-adenosyl-L-methionine-binding positions include 301–303, I306, 331–332, M382, and G411; these read GGD and TA.

It in the N-terminal section; belongs to the precorrin-2 dehydrogenase / sirohydrochlorin ferrochelatase family. In the C-terminal section; belongs to the precorrin methyltransferase family.

It carries out the reaction uroporphyrinogen III + 2 S-adenosyl-L-methionine = precorrin-2 + 2 S-adenosyl-L-homocysteine + H(+). The catalysed reaction is precorrin-2 + NAD(+) = sirohydrochlorin + NADH + 2 H(+). The enzyme catalyses siroheme + 2 H(+) = sirohydrochlorin + Fe(2+). The protein operates within cofactor biosynthesis; adenosylcobalamin biosynthesis; precorrin-2 from uroporphyrinogen III: step 1/1. It participates in cofactor biosynthesis; adenosylcobalamin biosynthesis; sirohydrochlorin from precorrin-2: step 1/1. It functions in the pathway porphyrin-containing compound metabolism; siroheme biosynthesis; precorrin-2 from uroporphyrinogen III: step 1/1. Its pathway is porphyrin-containing compound metabolism; siroheme biosynthesis; siroheme from sirohydrochlorin: step 1/1. The protein operates within porphyrin-containing compound metabolism; siroheme biosynthesis; sirohydrochlorin from precorrin-2: step 1/1. Its function is as follows. Multifunctional enzyme that catalyzes the SAM-dependent methylations of uroporphyrinogen III at position C-2 and C-7 to form precorrin-2 via precorrin-1. Then it catalyzes the NAD-dependent ring dehydrogenation of precorrin-2 to yield sirohydrochlorin. Finally, it catalyzes the ferrochelation of sirohydrochlorin to yield siroheme. The chain is Siroheme synthase 2 from Pectobacterium atrosepticum (strain SCRI 1043 / ATCC BAA-672) (Erwinia carotovora subsp. atroseptica).